Reading from the N-terminus, the 363-residue chain is UDP-N-acetylglucosamine--N-acetylmuramyl-(pentapeptide) pyrophosphoryl-undecaprenol N-acetylglucosamine transferase (363 aa).

UDP-N-acetyl-alpha-D-glucosamine is bound by residues 14 to 16 (TGG), Arg-171, Ser-200, and Gln-290.

The protein belongs to the glycosyltransferase 28 family. MurG subfamily.

Its subcellular location is the cell inner membrane. It carries out the reaction di-trans,octa-cis-undecaprenyl diphospho-N-acetyl-alpha-D-muramoyl-L-alanyl-D-glutamyl-meso-2,6-diaminopimeloyl-D-alanyl-D-alanine + UDP-N-acetyl-alpha-D-glucosamine = di-trans,octa-cis-undecaprenyl diphospho-[N-acetyl-alpha-D-glucosaminyl-(1-&gt;4)]-N-acetyl-alpha-D-muramoyl-L-alanyl-D-glutamyl-meso-2,6-diaminopimeloyl-D-alanyl-D-alanine + UDP + H(+). The protein operates within cell wall biogenesis; peptidoglycan biosynthesis. In terms of biological role, cell wall formation. Catalyzes the transfer of a GlcNAc subunit on undecaprenyl-pyrophosphoryl-MurNAc-pentapeptide (lipid intermediate I) to form undecaprenyl-pyrophosphoryl-MurNAc-(pentapeptide)GlcNAc (lipid intermediate II). This is UDP-N-acetylglucosamine--N-acetylmuramyl-(pentapeptide) pyrophosphoryl-undecaprenol N-acetylglucosamine transferase from Borrelia garinii subsp. bavariensis (strain ATCC BAA-2496 / DSM 23469 / PBi) (Borreliella bavariensis).